Reading from the N-terminus, the 78-residue chain is Acyl carrier protein (78 aa).

Positions 2–77 (QNIEKKIKKI…SIFDIIKKYV (76 aa)) constitute a Carrier domain. Ser-37 carries the O-(pantetheine 4'-phosphoryl)serine modification.

The protein belongs to the acyl carrier protein (ACP) family. 4'-phosphopantetheine is transferred from CoA to a specific serine of apo-ACP by AcpS. This modification is essential for activity because fatty acids are bound in thioester linkage to the sulfhydryl of the prosthetic group.

The protein localises to the cytoplasm. Its pathway is lipid metabolism; fatty acid biosynthesis. In terms of biological role, carrier of the growing fatty acid chain in fatty acid biosynthesis. This chain is Acyl carrier protein, found in Buchnera aphidicola subsp. Baizongia pistaciae (strain Bp).